Here is a 327-residue protein sequence, read N- to C-terminus: Tetraspanin-4 (327 aa).

Residues 1 to 6 (MRSRSN) are Cytoplasmic-facing. A helical transmembrane segment spans residues 7-27 (LIGLINFFTFLLSIPILGGGI). Residues 28 to 43 (WLSSRANSTDCLRFLQ) lie on the Extracellular side of the membrane. N-linked (GlcNAc...) asparagine glycosylation occurs at Asn-34. A helical membrane pass occupies residues 44 to 64 (WPLIIIGISIMVISLAGIAGA). The Cytoplasmic portion of the chain corresponds to 65-75 (CYQNKFLMWLY). The helical transmembrane segment at 76 to 96 (LFTMFFVIAALIGFTIFAYVV) threads the bilayer. Residues 97–235 (TDKGSGRFVM…LGSLKKSWRK (139 aa)) lie on the Extracellular side of the membrane. A glycan (N-linked (GlcNAc...) asparagine) is linked at Asn-187. The helical transmembrane segment at 236-256 (VSVINIVVVIILVIFYVIACA) threads the bilayer. Over 257–287 (AYQNVKRMYNDEPVGEARMTNLILVIFKFKE) the chain is Cytoplasmic. A helical transmembrane segment spans residues 288–308 (ILVQFFFGIVFLLLFNGLMVC). The Extracellular segment spans residues 309 to 327 (CCNDKFAFSVFFFGYVTYA).

It belongs to the tetraspanin (TM4SF) family.

It is found in the membrane. Functionally, may be involved in the regulation of cell differentiation. The protein is Tetraspanin-4 (TET4) of Arabidopsis thaliana (Mouse-ear cress).